The sequence spans 242 residues: ATP-dependent dethiobiotin synthetase BioD (242 aa).

12-17 is a binding site for ATP; it reads EVGKTV. T16 lines the Mg(2+) pocket. Residue K37 is part of the active site. S41 is a substrate binding site. ATP contacts are provided by residues D51 and 112–115; that span reads EGAG. The Mg(2+) site is built by D51 and E112.

It belongs to the dethiobiotin synthetase family. As to quaternary structure, homodimer. It depends on Mg(2+) as a cofactor.

It is found in the cytoplasm. It carries out the reaction (7R,8S)-7,8-diammoniononanoate + CO2 + ATP = (4R,5S)-dethiobiotin + ADP + phosphate + 3 H(+). It participates in cofactor biosynthesis; biotin biosynthesis; biotin from 7,8-diaminononanoate: step 1/2. Functionally, catalyzes a mechanistically unusual reaction, the ATP-dependent insertion of CO2 between the N7 and N8 nitrogen atoms of 7,8-diaminopelargonic acid (DAPA, also called 7,8-diammoniononanoate) to form a ureido ring. The sequence is that of ATP-dependent dethiobiotin synthetase BioD from Bacillus anthracis (strain A0248).